The chain runs to 147 residues: Large ribosomal subunit protein uL16 (147 aa).

It belongs to the universal ribosomal protein uL16 family. In terms of assembly, part of the 50S ribosomal subunit.

Binds 23S rRNA and is also seen to make contacts with the A and possibly P site tRNAs. This is Large ribosomal subunit protein uL16 from Clostridium acetobutylicum (strain ATCC 824 / DSM 792 / JCM 1419 / IAM 19013 / LMG 5710 / NBRC 13948 / NRRL B-527 / VKM B-1787 / 2291 / W).